The sequence spans 424 residues: L-glutamine:scyllo-inosose aminotransferase (424 aa).

Residues 1-21 (MDSSLAISGGPRLSNREWPRW) form a disordered region. Lysine 202 is subject to N6-(pyridoxal phosphate)lysine.

The protein belongs to the DegT/DnrJ/EryC1 family. L-glutamine:2-deoxy-scyllo-inosose/scyllo-inosose aminotransferase subfamily. As to quaternary structure, homodimer. It depends on pyridoxal 5'-phosphate as a cofactor.

The enzyme catalyses scyllo-inosose + L-glutamine = 1-amino-1-deoxy-scyllo-inositol + 2-oxoglutaramate. It functions in the pathway antibiotic biosynthesis; streptomycin biosynthesis. Its function is as follows. Catalyzes the PLP-dependent transamination of scyllo-inosose to form scyllo-inosamine. This is L-glutamine:scyllo-inosose aminotransferase (stsC) from Streptomyces griseus.